A 207-amino-acid chain; its full sequence is Ribosome maturation factor RimM (207 aa).

Residues 114-207 (DDEYYWVDLI…RIDSDWPLDY (94 aa)) form the PRC barrel domain.

This sequence belongs to the RimM family. As to quaternary structure, binds ribosomal protein uS19.

The protein localises to the cytoplasm. Functionally, an accessory protein needed during the final step in the assembly of 30S ribosomal subunit, possibly for assembly of the head region. Essential for efficient processing of 16S rRNA. May be needed both before and after RbfA during the maturation of 16S rRNA. It has affinity for free ribosomal 30S subunits but not for 70S ribosomes. This chain is Ribosome maturation factor RimM, found in Bordetella pertussis (strain Tohama I / ATCC BAA-589 / NCTC 13251).